Here is a 132-residue protein sequence, read N- to C-terminus: Large ribosomal subunit protein eL28 (132 aa).

It belongs to the eukaryotic ribosomal protein eL28 family.

This Dictyostelium discoideum (Social amoeba) protein is Large ribosomal subunit protein eL28 (rpl28).